The sequence spans 236 residues: Purine nucleoside phosphorylase DeoD-type (236 aa).

His4 contacts a purine D-ribonucleoside. Residues Gly20, Arg24, Arg43, and 87–90 (RVGT) each bind phosphate. A purine D-ribonucleoside contacts are provided by residues 178–180 (EME) and 202–203 (SD). Asp203 functions as the Proton donor in the catalytic mechanism.

Belongs to the PNP/UDP phosphorylase family. In terms of assembly, homohexamer; trimer of homodimers.

It catalyses the reaction a purine D-ribonucleoside + phosphate = a purine nucleobase + alpha-D-ribose 1-phosphate. The enzyme catalyses a purine 2'-deoxy-D-ribonucleoside + phosphate = a purine nucleobase + 2-deoxy-alpha-D-ribose 1-phosphate. Its function is as follows. Catalyzes the reversible phosphorolytic breakdown of the N-glycosidic bond in the beta-(deoxy)ribonucleoside molecules, with the formation of the corresponding free purine bases and pentose-1-phosphate. The sequence is that of Purine nucleoside phosphorylase DeoD-type from Geobacillus kaustophilus (strain HTA426).